The sequence spans 149 residues: Large ribosomal subunit protein bL9 (149 aa).

This sequence belongs to the bacterial ribosomal protein bL9 family.

Its function is as follows. Binds to the 23S rRNA. The protein is Large ribosomal subunit protein bL9 of Xylella fastidiosa (strain 9a5c).